Here is a 513-residue protein sequence, read N- to C-terminus: Cytochrome P450 705A1 (513 aa).

Residues 9 to 29 (QNCFIIILLCSFSLISYFVFF) form a helical membrane-spanning segment. Cys-448 provides a ligand contact to heme.

The protein belongs to the cytochrome P450 family. Heme is required as a cofactor. As to expression, expressed in root stele, root cortex, root epidermis, root pericycle of the root hair zone, and quiescent center at the root meristematic zone.

The protein resides in the membrane. In terms of biological role, cleaves the arabidiol side chain at C15 to form 14-apo-arabidiol and a side-chain fragment. Involved in the biosynthesis of the volatile homoterpene (E)-4,8-dimethyl-1,3,7-nonatriene (DMNT) in roots. Involved in the production of DMNT by degrading the triterpene arabidiol. May be involved in the defense again the fungal root pathogen Pythium irregulare by producing DMNT. The sequence is that of Cytochrome P450 705A1 from Arabidopsis thaliana (Mouse-ear cress).